Reading from the N-terminus, the 470-residue chain is Sugar transporter ESL1 (470 aa).

Residues 10–16 carry the Essential for the localization to the vacuole membrane motif; sequence LEAGLLL. 12 helical membrane passes run 28–48, 68–88, 99–119, 130–150, 157–177, 186–206, 268–288, 303–323, 332–352, 368–388, 404–424, and 430–450; these read ITAV…CFGC, VAQY…GAIF, KGTM…VALA, LSTG…IAEI, GAFV…FYVI, LALI…FIPE, VVIG…GLMY, IGSM…LILV, LLAS…SFCF, IGVV…PWII, LVTL…NFML, and GTFL…YAMV.

This sequence belongs to the major facilitator superfamily. Sugar transporter (TC 2.A.1.1) family. In terms of tissue distribution, expressed in both shoots and roots. In roots, strongly expressed in pericycle and xylem parenchyma cells, and to a lesser extent in the root endodermis. In flowers, expressed in sepals.

Its subcellular location is the vacuole membrane. The protein resides in the vesicle. Sugar transporter. Transports monosaccharides across the vacuolar membrane independently from a proton gradient. May function coordinately with the vacuolar invertase to regulate osmotic pressure by affecting the accumulation of sugar in the cells under abiotic stress conditions. In Arabidopsis thaliana (Mouse-ear cress), this protein is Sugar transporter ESL1.